The chain runs to 158 residues: NAD(P)H-quinone oxidoreductase subunit J, chloroplastic (158 aa).

This sequence belongs to the complex I 30 kDa subunit family. NDH is composed of at least 16 different subunits, 5 of which are encoded in the nucleus.

It localises to the plastid. The protein localises to the chloroplast thylakoid membrane. The catalysed reaction is a plastoquinone + NADH + (n+1) H(+)(in) = a plastoquinol + NAD(+) + n H(+)(out). The enzyme catalyses a plastoquinone + NADPH + (n+1) H(+)(in) = a plastoquinol + NADP(+) + n H(+)(out). Functionally, NDH shuttles electrons from NAD(P)H:plastoquinone, via FMN and iron-sulfur (Fe-S) centers, to quinones in the photosynthetic chain and possibly in a chloroplast respiratory chain. The immediate electron acceptor for the enzyme in this species is believed to be plastoquinone. Couples the redox reaction to proton translocation, and thus conserves the redox energy in a proton gradient. In Lotus japonicus (Lotus corniculatus var. japonicus), this protein is NAD(P)H-quinone oxidoreductase subunit J, chloroplastic.